Here is a 745-residue protein sequence, read N- to C-terminus: Centromere protein I (745 aa).

Residues 1-27 (MATPRLTRNSQQQNRISQGSNSRQTTL) show a composition bias toward polar residues. The interval 1–58 (MATPRLTRNSQQQNRISQGSNSRQTTLLDWKVKDKAGNSKSVLEESSSLEDSNHADDQ) is disordered. Positions 39–50 (SKSVLEESSSLE) are enriched in low complexity.

The protein belongs to the CENP-I/CTF3 family. Component of the CENPA-CAD complex, composed of CENPI, CENPK, CENPL, CENPO, CENPP, CENPQ, CENPR and CENPS. The CENPA-CAD complex interacts with the CENPA-NAC complex, at least composed of CENPA, CENPC, CENPH, CENPM, CENPN, CENPT and CENPU. Interacts with SENP6. Post-translationally, sumoylated. Sumoylated form can be polyubiquitinated by RNF4, leading to its degradation. Desumoylation by SENP6 prevents its degradation. As to expression, highly expressed in testis, ovary and spleen. A much lower mRNA level is found in brain and lung, and no expression is detected in liver, kidney, heart, muscle, pituitary gland, prostate, epididymis and seminal vesicle.

Its subcellular location is the nucleus. The protein localises to the chromosome. The protein resides in the centromere. In terms of biological role, component of the CENPA-CAD (nucleosome distal) complex, a complex recruited to centromeres which is involved in assembly of kinetochore proteins, mitotic progression and chromosome segregation. May be involved in incorporation of newly synthesized CENPA into centromeres via its interaction with the CENPA-NAC complex. Required for the localization of CENPF, MAD1L1 and MAD2 (MAD2L1 or MAD2L2) to kinetochores. Involved in the response of gonadal tissues to follicle-stimulating hormone. This chain is Centromere protein I (Cenpi), found in Rattus norvegicus (Rat).